We begin with the raw amino-acid sequence, 68 residues long: MVTVAELQALRQARLDLLTGKRVVSVQKDGRRIEYTAASLDELNRAINDAESVLGTTRCRRRPLGVRL.

The protein belongs to the lambda phage gpW family.

This Escherichia coli O6:H1 (strain CFT073 / ATCC 700928 / UPEC) protein is P21 prophage-derived head-stabilizing protein.